The following is a 1012-amino-acid chain: Translation initiation factor IF-2, chloroplastic (1012 aa).

Residues 75 to 102 (GNSVSLDSNSNSSSSSKSGGDDGTGFVL) are compositionally biased toward low complexity. Disordered regions lie at residues 75-132 (GNSV…VEER), 147-294 (EKLG…KEKK), and 319-340 (APPK…RKKG). Residues 152–175 (SKVNGDKNNGSVNKPVRNNANASP) show a composition bias toward polar residues. A compositionally biased stretch (low complexity) spans 183–194 (SAASLKSKTLKS). A compositionally biased stretch (basic and acidic residues) spans 208 to 231 (VVKEVPKPSYNKNEEEKSQTRGGE). Over residues 240–257 (PQPPSKPQPLKPQQPSKP) the composition is skewed to pro residues. A compositionally biased stretch (basic and acidic residues) spans 277–294 (VLRDKGAAETSVKSKEKK). The 174-residue stretch at 488-661 (DRPPVITIMG…MLVAELQELK (174 aa)) folds into the tr-type G domain. The tract at residues 497-504 (GHVDHGKT) is G1. Residue 497-504 (GHVDHGKT) participates in GTP binding. The interval 522–526 (GITQG) is G2. Residues 547–550 (DTPG) are G3. GTP is bound by residues 547-551 (DTPGH) and 601-604 (NKID). A G4 region spans residues 601-604 (NKID). The G5 stretch occupies residues 637 to 639 (SAL).

The protein belongs to the TRAFAC class translation factor GTPase superfamily. Classic translation factor GTPase family. IF-2 subfamily.

The protein localises to the plastid. It is found in the chloroplast. Functionally, one of the essential components for the initiation of protein synthesis. Protects formylmethionyl-tRNA from spontaneous hydrolysis and promotes its binding to the 30S ribosomal subunits. Also involved in the hydrolysis of GTP during the formation of the 70S ribosomal complex. The chain is Translation initiation factor IF-2, chloroplastic (IF2CP) from Phaseolus vulgaris (Kidney bean).